A 343-amino-acid chain; its full sequence is 2,3,4,5-tetrahydropyridine-2,6-dicarboxylate N-succinyltransferase (343 aa).

Glutamate 204 contacts Mg(2+). Catalysis depends on glutamate 220, which acts as the Acyl-anhydride intermediate. Succinyl-CoA-binding positions include arginine 222, glycine 237, serine 240, alanine 263, 278–279 (ES), glycine 286, lysine 303, and 316–319 (RRNS).

This sequence belongs to the type 2 tetrahydrodipicolinate N-succinyltransferase family. Homotrimer.

The protein resides in the cytoplasm. The catalysed reaction is (S)-2,3,4,5-tetrahydrodipicolinate + succinyl-CoA + H2O = (S)-2-succinylamino-6-oxoheptanedioate + CoA. Its pathway is amino-acid biosynthesis; L-lysine biosynthesis via DAP pathway; LL-2,6-diaminopimelate from (S)-tetrahydrodipicolinate (succinylase route): step 1/3. Catalyzes the conversion of the cyclic tetrahydrodipicolinate (THDP) into the acyclic N-succinyl-L-2-amino-6-oxopimelate using succinyl-CoA. This is 2,3,4,5-tetrahydropyridine-2,6-dicarboxylate N-succinyltransferase from Vibrio cholerae serotype O1 (strain ATCC 39315 / El Tor Inaba N16961).